A 365-amino-acid chain; its full sequence is Ribosomal RNA large subunit methyltransferase M (365 aa).

Residues Ser-187, 220-223 (CPGG), Asp-239, Asp-259, and Asp-276 each bind S-adenosyl-L-methionine. The active-site Proton acceptor is Lys-305.

This sequence belongs to the class I-like SAM-binding methyltransferase superfamily. RNA methyltransferase RlmE family. RlmM subfamily. Monomer.

It is found in the cytoplasm. It catalyses the reaction cytidine(2498) in 23S rRNA + S-adenosyl-L-methionine = 2'-O-methylcytidine(2498) in 23S rRNA + S-adenosyl-L-homocysteine + H(+). Functionally, catalyzes the 2'-O-methylation at nucleotide C2498 in 23S rRNA. In Psychromonas ingrahamii (strain DSM 17664 / CCUG 51855 / 37), this protein is Ribosomal RNA large subunit methyltransferase M.